The primary structure comprises 391 residues: Aspartic protease 17 (391 aa).

A signal peptide spans 1-15; that stretch reads MHLIFLLFLAPFCSA. Residues 65 to 385 enclose the Peptidase A1 domain; the sequence is YLGNFTVGTP…DIGNARIGFA (321 aa). The N-linked (GlcNAc...) asparagine glycan is linked to N68. D83 is an active-site residue. N108 carries an N-linked (GlcNAc...) asparagine glycan. D274 is a catalytic residue. C309 and C345 are joined by a disulfide.

Belongs to the peptidase A1 family. As to expression, expressed in intestinal cells.

It is found in the secreted. Functionally, aspartic proteinase. This Caenorhabditis elegans protein is Aspartic protease 17.